The chain runs to 644 residues: Probable lysophospholipase 2 (644 aa).

Residues 1–19 form the signal peptide; sequence MYFQSFYFLALLLATAVYG. Asn44, Asn96, Asn141, Asn178, Asn221, Asn245, Asn253, Asn281, Asn286, Asn316, Asn319, Asn373, Asn393, Asn449, Asn501, Asn558, Asn579, and Asn596 each carry an N-linked (GlcNAc...) asparagine glycan. The PLA2c domain occupies 53–600; the sequence is SCDSSEIMVN…SQYCWNGTVD (548 aa).

Belongs to the lysophospholipase family.

Its subcellular location is the secreted. The catalysed reaction is a 1-acyl-sn-glycero-3-phosphocholine + H2O = sn-glycerol 3-phosphocholine + a fatty acid + H(+). Functionally, catalyzes the release of fatty acids from lysophospholipids. This is Probable lysophospholipase 2 (plb2) from Schizosaccharomyces pombe (strain 972 / ATCC 24843) (Fission yeast).